The primary structure comprises 59 residues: MGRLGLTEILVIVGIVILLFGGKKIPELMKGLGSGIKEFKNAAKDDQPAPAKKQEEEQK.

A helical membrane pass occupies residues 1 to 21 (MGRLGLTEILVIVGIVILLFG).

The protein belongs to the TatA/E family. In terms of assembly, forms a complex with TatC.

The protein resides in the cell inner membrane. Functionally, part of the twin-arginine translocation (Tat) system that transports large folded proteins containing a characteristic twin-arginine motif in their signal peptide across membranes. TatA could form the protein-conducting channel of the Tat system. The sequence is that of Sec-independent protein translocase protein TatA from Flavobacterium johnsoniae (strain ATCC 17061 / DSM 2064 / JCM 8514 / BCRC 14874 / CCUG 350202 / NBRC 14942 / NCIMB 11054 / UW101) (Cytophaga johnsonae).